The chain runs to 947 residues: Regulator of spindle assembly protein 2 (947 aa).

2 disordered regions span residues 20-148 (EKPA…LSEQ) and 173-211 (SPHE…LKPR). 2 stretches are compositionally biased toward basic and acidic residues: residues 30–50 (PKYR…EGEK) and 62–84 (TRED…DLRI). Polar residues-rich tracts occupy residues 90 to 102 (SATP…SDQY) and 179 to 188 (QQTIQESSEQ). Residues 276–320 (IIAEEAKKRRNEAEAVRKLIEVETQNAKKRAVIQELKDRIDKLTQ) are a coiled coil. Disordered regions lie at residues 407 to 453 (KINP…RRIG), 575 to 594 (ERES…LEIP), 600 to 662 (SVTT…GLII), and 681 to 705 (EQSL…FLLD). Residues 411–422 (SSQLNQQSSSDA) are compositionally biased toward low complexity. Positions 430 to 449 (EASTQMTSRLAESAMTQTSP) are enriched in polar residues. Residues 563–591 (AGLSHYLEQVKKERESMEAQESESESMEL) are a coiled coil. Residues 580–590 (EAQESESESME) show a composition bias toward acidic residues. Residues 645–657 (FEHEIEEHKEPEK) show a composition bias toward basic and acidic residues.

As to quaternary structure, interacts with phosphatase regulatory subunit rsa-1 and tpxl-1. May interact with spd-5. May interact with sys-1.

The protein localises to the cytoplasm. It is found in the cytoskeleton. It localises to the microtubule organizing center. Its subcellular location is the centrosome. Its function is as follows. Recruits rsa-1 and, thereby, phosphatase let-92/paa-1 complex to the centrosomes. Recruits sys-1/beta-catenin to mitotic centrosomes during the first embryonic cell divisions. This is Regulator of spindle assembly protein 2 from Caenorhabditis elegans.